The sequence spans 263 residues: MQKTHVSPSRWLLSPKMTAEAEVLLFSFHYAGGHAGIYREWQKKLPVQIGVCPVQLPGRSNRFMEPYYTDLSVMIRELAEALLPHLNRPFAFFGHSMGALVSFELARYLRNQYGIKPRHMFASGRHAPHLPDPGEAIHHLPDAEFLKGLRTLNGTPKELFENEENEEILQMLLPMLRADFTICEQYQYQEEEPLGCGLTAIGGWQDPDITVAHMEAWRKHTSASFQMHMLQGDHFFLHSEQEQLLAIIESTLQSYLVGYRGIG.

The active site involves Ser96.

The protein belongs to the thioesterase family.

In the final step of gramicidin biosynthesis, reduces the pentadecapeptide-aldehyde intermediate, that is released from the terminal module of the non-ribosomal peptide synthetase LgrD, to the final product ethanolamine-containing gramicidin. In Brevibacillus parabrevis, this protein is Linear gramicidin dehydrogenase LgrE (lgrE).